A 373-amino-acid polypeptide reads, in one-letter code: Thyroid hormone receptor beta-A (373 aa).

Residues 1–18 (MPSSMSGYIPSYLDKDEL) form a modulating region. NR C4-type zinc fingers lie at residues 19–39 (CVVCGDKATGYHYRCITCEGC) and 57–81 (CKYEGKCVIDKVTRNQCQECRFKKC). The nuclear receptor DNA-binding region spans 19 to 93 (CVVCGDKATG…VGMATDLVLD (75 aa)). In terms of domain architecture, NR LBD spans 129–373 (EEWELIQVVT…PPLFLEVFED (245 aa)).

This sequence belongs to the nuclear hormone receptor family. NR1 subfamily.

The protein localises to the nucleus. Functionally, high affinity receptor for triiodothyronine (T3). This Xenopus laevis (African clawed frog) protein is Thyroid hormone receptor beta-A (thrb-a).